We begin with the raw amino-acid sequence, 620 residues long: Preterminal protein (620 aa).

The short motif at 356–365 (RLPMRRRRRR) is the Nuclear localization signal element. Ser-545 is modified (O-(5'-phospho-DNA)-serine).

It belongs to the adenoviridae terminal protein family. As to quaternary structure, heterodimer with the polymerase; this heterodimer binds to bp 9 to 18 of the genome. Interacts with host POU2F1; POU2F1 binds to the auxiliary sequences in the inverted terminal repeats and tethers the pTP-POL heterodimer to the origin DNA thereby participating in the assembly of the pre-initiation complex (POL-TP-DBP-NFIA-POU2F1). Preterminal protein is used to replicate viral genome, upon genomic encapsidation it is processed first into iTP and finally into TP by adenovirus protease.

Its subcellular location is the host nucleus matrix. Functionally, protein covalently bound to the viral DNA that acts as a primer for viral genomic replication by DNA strand displacement. Assembles on the viral origin of replication in an initiation complex with viral polymerase, DBP, host NFIA and host POU2F1/OCT1. During initiation, the polymerase covalently couples the first dCTP with Ser-580 of pTP. The terminal protein stimulates the template activity over 20 fold compared to protein-free templates. Neo-synthesized viral genomes are linked to two preterminal proteins, one for each 5' end. These new genomes are encapsidated in the nucleus, and during capsid maturation by viral protease, preterminal protein is first cleaved into intermediary (iTP), then into mature TP. May play a role in host nuclear matrix localization of genomic DNA. The sequence is that of Preterminal protein from Bovine adenovirus 2 (BAdV-2).